The primary structure comprises 150 residues: UPF0178 protein HCH_06960 (150 aa).

It belongs to the UPF0178 family.

This is UPF0178 protein HCH_06960 from Hahella chejuensis (strain KCTC 2396).